Reading from the N-terminus, the 296-residue chain is Thymidylate synthase (296 aa).

DUMP is bound by residues R23 and 157–158 (RR). C177 serves as the catalytic Nucleophile. DUMP-binding positions include 198–201 (RSAD), N209, and 239–241 (HIY). Residue D201 coordinates (6R)-5,10-methylene-5,6,7,8-tetrahydrofolate. A295 is a (6R)-5,10-methylene-5,6,7,8-tetrahydrofolate binding site.

This sequence belongs to the thymidylate synthase family. Bacterial-type ThyA subfamily. In terms of assembly, homodimer.

Its subcellular location is the cytoplasm. It carries out the reaction dUMP + (6R)-5,10-methylene-5,6,7,8-tetrahydrofolate = 7,8-dihydrofolate + dTMP. It functions in the pathway pyrimidine metabolism; dTTP biosynthesis. Its function is as follows. Catalyzes the reductive methylation of 2'-deoxyuridine-5'-monophosphate (dUMP) to 2'-deoxythymidine-5'-monophosphate (dTMP) while utilizing 5,10-methylenetetrahydrofolate (mTHF) as the methyl donor and reductant in the reaction, yielding dihydrofolate (DHF) as a by-product. This enzymatic reaction provides an intracellular de novo source of dTMP, an essential precursor for DNA biosynthesis. The sequence is that of Thymidylate synthase from Zymomonas mobilis subsp. mobilis (strain ATCC 31821 / ZM4 / CP4).